The following is a 749-amino-acid chain: Disintegrin and metalloproteinase domain-containing protein 10 (749 aa).

Residues 1–19 form the signal peptide; sequence MVLPTVLILLLSWAAGLGG. The propeptide occupies 20-214; the sequence is QYGNPLNKYI…SGPELLRKKR (195 aa). The Extracellular segment spans residues 20 to 673; it reads QYGNPLNKYI…SPQLYENIAE (654 aa). The Cysteine switch motif lies at 171-178; sequence GGCADHSV. C173 is a binding site for Zn(2+). The region spanning 221-457 is the Peptidase M12B domain; sequence NTCQLYIQTD…KRNNCFVESG (237 aa). Intrachain disulfides connect C223-C314, C345-C452, C400-C436, C461-C496, C472-C485, C474-C480, C484-C516, C504-C512, C511-C537, C525-C544, C531-C563, C556-C568, C573-C599, C581-C608, C583-C598, C595-C640, and C633-C646. 2 N-linked (GlcNAc...) asparagine glycosylation sites follow: N268 and N279. Position 384 (H384) interacts with Zn(2+). E385 is a catalytic residue. 2 residues coordinate Zn(2+): H388 and H394. Residue N440 is glycosylated (N-linked (GlcNAc...) asparagine). Residues 458 to 552 form the Disintegrin domain; that stretch reads QPICGNGMVE…LCPASDPKPN (95 aa). N552 is a glycosylation site (N-linked (GlcNAc...) asparagine). A helical transmembrane segment spans residues 674–694; it reads WIVAHWWAVLLMGIALIMLMA. Over 695 to 749 the chain is Cytoplasmic; that stretch reads GFIKICSVHTPSSNPKLPPPKPLPGTLKRRRPPQPIQQPPRQRPRESYQMGHMRR. The interval 705 to 749 is disordered; that stretch reads PSSNPKLPPPKPLPGTLKRRRPPQPIQQPPRQRPRESYQMGHMRR. The short motif at 709-716 is the SH3-binding element; sequence PKLPPPKP. T720 bears the Phosphothreonine mark. The SH3-binding motif lies at 723–729; it reads RRRPPQP. An interaction with AP2A1, AP2A2 and AP2M1 region spans residues 735 to 749; that stretch reads RQRPRESYQMGHMRR.

As to quaternary structure, forms a ternary EFNA5-EPHA3-ADAM10 complex mediating EFNA5 extracellular domain shedding by ADAM10 which regulates the EFNA5-EPHA3 complex internalization and function, the cleavage occurs in trans, with ADAM10 and its substrate being on the membranes of opposing cells. Interacts with the clathrin adapter AP2 complex subunits AP2A1, AP2A2, AP2B1, and AP2M1; this interaction facilitates ADAM10 endocytosis from the plasma membrane during long-term potentiation in hippocampal neurons. Forms a ternary complex composed of ADAM10, EPHA4 and CADH1; within the complex, ADAM10 cleaves CADH1 which disrupts adherens junctions. Interacts with EPHA2. Interacts with NGF in a divalent cation-dependent manner. Interacts with TSPAN14; the interaction promotes ADAM10 maturation and cell surface expression. Interacts with TSPAN5, TSPAN10, TSPAN14, TSPAN15, TSPAN17 and TSPAN33; these interactions regulate ADAM10 substrate specificity, endocytosis and turnover. Interacts (via extracellular domain) with TSPAN33 (via extracellular domain) and (via cytoplasmic domain) with AFDN; interaction with TSPAN33 allows the docking of ADAM10 to zonula adherens through a PDZ11-dependent interaction between TSPAN33 and PLEKHA7 while interaction with AFDN locks ADAM10 at zonula adherens. Interacts with DLG1; this interaction recruits ADAM10 to the cell membrane during long-term depression in hippocampal neurons. Interacts (via extracellular domain) with BACE1 (via extracellular domain). Interacts with FAM171A1. It depends on Zn(2+) as a cofactor. In terms of processing, the precursor is cleaved by furin and PCSK7. Expressed in the brain, specifically in neurons and astrocytes (at protein level). Expressed in inner and outer pillar cells of the organ of Corti (at protein level). Expressed in kidney and lung.

It localises to the cell membrane. It is found in the golgi apparatus membrane. The protein resides in the cytoplasmic vesicle. The protein localises to the clathrin-coated vesicle. Its subcellular location is the cell projection. It localises to the axon. It is found in the dendrite. The protein resides in the cell junction. The protein localises to the adherens junction. Its subcellular location is the cytoplasm. The enzyme catalyses Endopeptidase of broad specificity.. With respect to regulation, catalytically inactive when the propeptide is intact and associated with the mature enzyme. The disintegrin and cysteine-rich regions modulate access of substrates to exerts an inhibitory effect on the cleavage of ADAM10 substrates. In terms of biological role, transmembrane metalloprotease which mediates the ectodomain shedding of a myriad of transmembrane proteins, including adhesion proteins, growth factor precursors and cytokines being essential for development and tissue homeostasis. Associates with six members of the tetraspanin superfamily TspanC8 which regulate its exit from the endoplasmic reticulum and its substrate selectivity. Cleaves the membrane-bound precursor of TNF-alpha to its mature soluble form. Responsible for the proteolytical release of soluble JAM3 from endothelial cells surface. Responsible for the proteolytic release of several other cell-surface proteins, including heparin-binding epidermal growth-like factor, ephrin-A2, CD44, CDH2 and for constitutive and regulated alpha-secretase cleavage of amyloid precursor protein (APP) at '687-Lys-|-Leu-688'. Contributes to the normal cleavage of the cellular prion protein. Involved in the cleavage of the adhesion molecule L1 at the cell surface and in released membrane vesicles, suggesting a vesicle-based protease activity. Also controls the proteolytic processing of Notch and mediates lateral inhibition during neurogenesis. Required for the development of type 1 transitional B cells into marginal zone B cells, probably by cleaving Notch. Responsible for the FasL ectodomain shedding and for the generation of the remnant ADAM10-processed FasL (FasL APL) transmembrane form. Also cleaves the ectodomain of the integral membrane proteins CORIN and ITM2B. Mediates the proteolytic cleavage of LAG3, leading to release the secreted form of LAG3. Mediates the proteolytic cleavage of IL6R and IL11RA, leading to the release of secreted forms of IL6R and IL11RA. Enhances the cleavage of CHL1 by BACE1. Cleaves NRCAM. Cleaves TREM2, resulting in shedding of the TREM2 ectodomain. Involved in the development and maturation of glomerular and coronary vasculature. During development of the cochlear organ of Corti, promotes pillar cell separation by forming a ternary complex with CADH1 and EPHA4 and cleaving CADH1 at adherens junctions. May regulate the EFNA5-EPHA3 signaling. The chain is Disintegrin and metalloproteinase domain-containing protein 10 (Adam10) from Mus musculus (Mouse).